A 311-amino-acid chain; its full sequence is Olfactory receptor 4S2 (311 aa).

The Extracellular portion of the chain corresponds to 1-23; sequence MEKINNVTEFIFWGLSQSPEIEK. The N-linked (GlcNAc...) asparagine glycan is linked to Asn-6. A helical transmembrane segment spans residues 24–47; it reads VCFVVFSFFYIIILLGNLLIMLTV. The Cytoplasmic segment spans residues 48–55; the sequence is CLSNLFKS. Residues 56 to 77 traverse the membrane as a helical segment; it reads PMYFFLSFLSFVDICYSSVTAP. Topologically, residues 78-98 are extracellular; that stretch reads KMIVDLLAKDKTISYVGCMLQ. Cys-95 and Cys-187 are disulfide-bonded. Residues 99-118 traverse the membrane as a helical segment; that stretch reads LFGVHFFGCTEIFILTVMAY. Residues 119-137 are Cytoplasmic-facing; sequence DRYVAICKPLHYMTIMNRE. The chain crosses the membrane as a helical span at residues 138–156; the sequence is TCNKMLLGTWVGGFLHSII. The Extracellular segment spans residues 157–193; the sequence is QVALVVQLPFCGPNEIDHYFCDVHPVLKLACTETYIV. A helical transmembrane segment spans residues 194-217; sequence GVVVTANSGTIALGSFVILLISYS. Over 218–233 the chain is Cytoplasmic; sequence IILVSLRKQSAEGRRK. The chain crosses the membrane as a helical span at residues 234-256; sequence ALSTCGSHIAMVVIFFGPCTFMY. Over 257 to 267 the chain is Extracellular; sequence MRPDTTFSEDK. Residues 268 to 287 traverse the membrane as a helical segment; the sequence is MVAVFYTIITPMLNPLIYTL. The Cytoplasmic segment spans residues 288 to 311; sequence RNAEVKNAMKKLWGRNVFLEAKGK.

Belongs to the G-protein coupled receptor 1 family.

It is found in the cell membrane. Odorant receptor. The chain is Olfactory receptor 4S2 (OR4S2) from Homo sapiens (Human).